The primary structure comprises 285 residues: Bifunctional protein FolD (285 aa).

NADP(+) contacts are provided by residues 169–171 (GRS), S194, and I235.

It belongs to the tetrahydrofolate dehydrogenase/cyclohydrolase family. Homodimer.

The catalysed reaction is (6R)-5,10-methylene-5,6,7,8-tetrahydrofolate + NADP(+) = (6R)-5,10-methenyltetrahydrofolate + NADPH. The enzyme catalyses (6R)-5,10-methenyltetrahydrofolate + H2O = (6R)-10-formyltetrahydrofolate + H(+). It functions in the pathway one-carbon metabolism; tetrahydrofolate interconversion. Functionally, catalyzes the oxidation of 5,10-methylenetetrahydrofolate to 5,10-methenyltetrahydrofolate and then the hydrolysis of 5,10-methenyltetrahydrofolate to 10-formyltetrahydrofolate. This Microcystis aeruginosa (strain NIES-843 / IAM M-2473) protein is Bifunctional protein FolD.